Consider the following 692-residue polypeptide: DNA ligase (692 aa).

NAD(+)-binding positions include 35–39 (DLVYD), 88–89 (SL), and Glu117. The active-site N6-AMP-lysine intermediate is the Lys119. 4 residues coordinate NAD(+): Arg140, Glu176, Lys301, and Lys325. 4 residues coordinate Zn(2+): Cys416, Cys419, Cys434, and Cys439. A BRCT domain is found at 611–692 (LTNQSNSWAS…FDLIKNSKKT (82 aa)).

Belongs to the NAD-dependent DNA ligase family. LigA subfamily. The cofactor is Mg(2+). Requires Mn(2+) as cofactor.

It carries out the reaction NAD(+) + (deoxyribonucleotide)n-3'-hydroxyl + 5'-phospho-(deoxyribonucleotide)m = (deoxyribonucleotide)n+m + AMP + beta-nicotinamide D-nucleotide.. DNA ligase that catalyzes the formation of phosphodiester linkages between 5'-phosphoryl and 3'-hydroxyl groups in double-stranded DNA using NAD as a coenzyme and as the energy source for the reaction. It is essential for DNA replication and repair of damaged DNA. This chain is DNA ligase, found in Mesomycoplasma hyopneumoniae (strain 7448) (Mycoplasma hyopneumoniae).